A 572-amino-acid chain; its full sequence is Frizzled-7 (572 aa).

The signal sequence occupies residues Met-1 to Ala-32. The Extracellular segment spans residues Gln-33–Trp-254. The FZ domain maps to Pro-44–Gln-163. 5 cysteine pairs are disulfide-bonded: Cys-49–Cys-110, Cys-57–Cys-103, Cys-94–Cys-131, Cys-120–Cys-160, and Cys-124–Cys-148. Residue Asn-63 is glycosylated (N-linked (GlcNAc...) asparagine). The N-linked (GlcNAc...) asparagine glycan is linked to Asn-164. A helical membrane pass occupies residues Val-255 to Val-275. Over Asp-276–Pro-286 the chain is Cytoplasmic. Residues Ile-287–Leu-307 form a helical membrane-spanning segment. Residues Glu-308–Cys-334 are Extracellular-facing. The chain crosses the membrane as a helical span at residues Thr-335–Leu-355. Topologically, residues Ser-356–Gln-377 are cytoplasmic. Residues Tyr-378–Gly-398 form a helical membrane-spanning segment. Topologically, residues Gln-399–Gly-421 are extracellular. Residues Phe-422–Phe-442 form a helical membrane-spanning segment. Residues Val-443 to Arg-468 are Cytoplasmic-facing. The chain crosses the membrane as a helical span at residues Ile-469–Tyr-489. Topologically, residues Glu-490–Thr-526 are extracellular. Residues Val-527 to Trp-547 traverse the membrane as a helical segment. Residues Ser-548–Val-572 lie on the Cytoplasmic side of the membrane. Positions Lys-550–Trp-555 match the Lys-Thr-X-X-X-Trp motif, mediates interaction with the PDZ domain of Dvl family members motif. The PDZ-binding motif lies at Thr-570 to Val-572.

This sequence belongs to the G-protein coupled receptor Fz/Smo family. In terms of assembly, interacts with MAGI3. Interacts with DVL1. Interacts with CCDC88C/DAPLE; the interaction displaces DVL1 from FZD7, leading to inhibition of canonical Wnt signaling and triggering of non-canonical Wnt responses. Interacts with MYOC. Binds to SDCBP; this interaction is increased by inositol trisphosphate (IP3). Interacts with glypican GPC3. Ubiquitinated by ZNRF3, leading to its degradation by the proteasome.

The protein localises to the cell membrane. It localises to the endosome membrane. In terms of biological role, receptor for Wnt proteins. Most frizzled receptors are coupled to the beta-catenin canonical signaling pathway, which leads to the activation of disheveled proteins, inhibition of GSK-3 kinase, nuclear accumulation of beta-catenin and activation of Wnt target genes. A second signaling pathway involving PKC and calcium fluxes has been seen for some family members, but it is not yet clear if it represents a distinct pathway or if it can be integrated in the canonical pathway, as PKC seems to be required for Wnt-mediated inactivation of GSK-3 kinase. Both pathways seem to involve interactions with G-proteins. Activation by WNT8 induces expression of beta-catenin target genes. Following ligand activation, binds to CCDC88C/DAPLE which displaces DVL1 from FZD7 and leads to inhibition of canonical Wnt signaling, activation of G-proteins by CCDC88C and triggering of non-canonical Wnt responses. May be involved in transduction and intercellular transmission of polarity information during tissue morphogenesis and/or in differentiated tissues. This chain is Frizzled-7 (Fzd7), found in Mus musculus (Mouse).